The following is a 277-amino-acid chain: Ribosomal RNA small subunit methyltransferase A (277 aa).

Positions 24, 26, 51, 72, 96, and 123 each coordinate S-adenosyl-L-methionine.

It belongs to the class I-like SAM-binding methyltransferase superfamily. rRNA adenine N(6)-methyltransferase family. RsmA subfamily.

Its subcellular location is the cytoplasm. The catalysed reaction is adenosine(1518)/adenosine(1519) in 16S rRNA + 4 S-adenosyl-L-methionine = N(6)-dimethyladenosine(1518)/N(6)-dimethyladenosine(1519) in 16S rRNA + 4 S-adenosyl-L-homocysteine + 4 H(+). Specifically dimethylates two adjacent adenosines (A1518 and A1519) in the loop of a conserved hairpin near the 3'-end of 16S rRNA in the 30S particle. May play a critical role in biogenesis of 30S subunits. This Ureaplasma parvum serovar 3 (strain ATCC 27815 / 27 / NCTC 11736) protein is Ribosomal RNA small subunit methyltransferase A.